Here is a 163-residue protein sequence, read N- to C-terminus: Large ribosomal subunit protein uL22c (163 aa).

This sequence belongs to the universal ribosomal protein uL22 family. Part of the 50S ribosomal subunit.

The protein localises to the plastid. It is found in the chloroplast. Its function is as follows. This protein binds specifically to 23S rRNA. In terms of biological role, the globular domain of the protein is located near the polypeptide exit tunnel on the outside of the subunit, while an extended beta-hairpin is found that lines the wall of the exit tunnel in the center of the 70S ribosome. In Lobularia maritima (Sweet alyssum), this protein is Large ribosomal subunit protein uL22c (rpl22).